A 385-amino-acid chain; its full sequence is DNA replication and repair protein RecF (385 aa).

30–37 (GSNGFGKT) contacts ATP.

It belongs to the RecF family.

The protein localises to the cytoplasm. Functionally, the RecF protein is involved in DNA metabolism; it is required for DNA replication and normal SOS inducibility. RecF binds preferentially to single-stranded, linear DNA. It also seems to bind ATP. The sequence is that of DNA replication and repair protein RecF from Mycobacterium avium (strain 104).